The following is a 118-amino-acid chain: GRB2-related adapter protein-like (118 aa).

Positions M1–H58 constitute an SH3 domain. The SH2 domain maps to W60 to G118. Residues E89 to G118 are disordered. The segment covering S90 to A103 has biased composition (polar residues).

The protein belongs to the GRB2/sem-5/DRK family.

This is GRB2-related adapter protein-like (GRAPL) from Homo sapiens (Human).